A 1497-amino-acid polypeptide reads, in one-letter code: Dual oxidase 1 (1497 aa).

A signal peptide spans 1–21 (MRSKHVLYIAILFSSIFGGKG). Over 22-587 (IQQNEEFQRY…MQSTYWTDND (566 aa)) the chain is Extracellular. The peroxidase-like; mediates peroxidase activity stretch occupies residues 26–590 (EEFQRYDGWY…TYWTDNDTTY (565 aa)). 4 N-linked (GlcNAc...) asparagine glycosylation sites follow: asparagine 66, asparagine 305, asparagine 567, and asparagine 586. Residues 588–608 (TTYVFTLIGLACVPLICYGIG) form a helical membrane-spanning segment. Residues 609-986 (RYLVNRRIAI…VSAFLETYRQ (378 aa)) are Cytoplasmic-facing. EF-hand domains are found at residues 817-852 (ANNE…FVNA) and 853-888 (PQKQ…LNQT). Residues 987–1007 (HVFIVFCFVAINLVLFFERFW) traverse the membrane as a helical segment. Topologically, residues 1008–1024 (HYRYMAENRDLRRVMGA) are extracellular. The helical transmembrane segment at 1025–1045 (GIAITRGAAGALSFCMALILL) threads the bilayer. One can recognise a Ferric oxidoreductase domain in the interval 1030 to 1210 (RGAAGALSFC…FVIDRIIGLM (181 aa)). At 1046–1068 (TVCRNIITLLRETVIAQYIPFDS) the chain is on the cytoplasmic side. Residues 1069-1089 (AIAFHKIVALFAAFWATLHTV) traverse the membrane as a helical segment. Over 1090–1134 (GHCVNFYHVGTQSQEGLACLFQEAFFGSNFLPSISYWFFSTITGL) the chain is Extracellular. A helical membrane pass occupies residues 1135 to 1155 (TGIALVAVMCIIYVFALPCFI). Residues 1156–1163 (KRAYHAFR) lie on the Cytoplasmic side of the membrane. Residues 1164 to 1184 (LTHLLNIAFYALTLLHGLPKL) form a helical membrane-spanning segment. Residues 1185–1189 (LDSPK) lie on the Extracellular side of the membrane. The chain crosses the membrane as a helical span at residues 1190–1210 (FGYYVVGPIVLFVIDRIIGLM). Residues 1211-1318 (QYYKKLEIVN…KGPYGDGNQE (108 aa)) enclose the FAD-binding FR-type domain. Over 1211-1497 (QYYKKLEIVN…PSFAHRFETF (287 aa)) the chain is Cytoplasmic.

It in the N-terminal section; belongs to the peroxidase family. Interacts with doxa-1 and tsp-15. Interacts with rho-1. In terms of tissue distribution, expressed in hypodermal cells.

The protein localises to the membrane. The catalysed reaction is NADH + O2 + H(+) = H2O2 + NAD(+). The enzyme catalyses NADPH + O2 + H(+) = H2O2 + NADP(+). Its activity is regulated as follows. Peroxidase activity is inhibited by aminobenzohydrazide. Plays a role in cuticle biogenesis. In complex with doxa-1 and tsp-15, produces reactive oxygen species (ROS), which are probably used by mlt-7 for tyrosine cross-linking, thus stabilizing cuticular extracellular matrix. May regulate the production of ROS by playing a role in modulating proline catabolism. Required in combination with mlt-7 for correct formation of cross-links in cuticle collagens. Association with the GTPase rho-1 promotes ROS production and this interaction may be modulated by memo-1, in order to control the oxidative stress response and longevity. In Caenorhabditis elegans, this protein is Dual oxidase 1.